A 155-amino-acid chain; its full sequence is Anaerobic ribonucleoside-triphosphate reductase-activating protein (155 aa).

The [4Fe-4S] cluster site is built by cysteine 26, cysteine 30, and cysteine 33. Residues 32 to 34 and glycine 74 each bind S-adenosyl-L-methionine; that span reads GCY.

It belongs to the organic radical-activating enzymes family. In terms of assembly, forms a tetramer composed of two NrdD and two NrdG subunits. It depends on [4Fe-4S] cluster as a cofactor.

The protein resides in the cytoplasm. The catalysed reaction is glycyl-[protein] + reduced [flavodoxin] + S-adenosyl-L-methionine = glycin-2-yl radical-[protein] + semiquinone [flavodoxin] + 5'-deoxyadenosine + L-methionine + H(+). Activation of anaerobic ribonucleoside-triphosphate reductase under anaerobic conditions by generation of an organic free radical, using S-adenosylmethionine and reduced flavodoxin as cosubstrates to produce 5'-deoxy-adenosine. The protein is Anaerobic ribonucleoside-triphosphate reductase-activating protein (nrdG) of Vibrio cholerae serotype O1 (strain ATCC 39315 / El Tor Inaba N16961).